The chain runs to 348 residues: Phosphoribosylformylglycinamidine cyclo-ligase (348 aa).

Belongs to the AIR synthase family.

It is found in the cytoplasm. It catalyses the reaction 2-formamido-N(1)-(5-O-phospho-beta-D-ribosyl)acetamidine + ATP = 5-amino-1-(5-phospho-beta-D-ribosyl)imidazole + ADP + phosphate + H(+). It functions in the pathway purine metabolism; IMP biosynthesis via de novo pathway; 5-amino-1-(5-phospho-D-ribosyl)imidazole from N(2)-formyl-N(1)-(5-phospho-D-ribosyl)glycinamide: step 2/2. This is Phosphoribosylformylglycinamidine cyclo-ligase from Cereibacter sphaeroides (strain KD131 / KCTC 12085) (Rhodobacter sphaeroides).